The chain runs to 64 residues: Small ribosomal subunit protein bS21 (64 aa).

Belongs to the bacterial ribosomal protein bS21 family.

In Pelagibacter ubique (strain HTCC1062), this protein is Small ribosomal subunit protein bS21.